The sequence spans 170 residues: 4-hydroxyphenylacetate 3-monooxygenase reductase component (170 aa).

Belongs to the non-flavoprotein flavin reductase family. HpaC subfamily. Monomer. HPA 3-hydroxylase consists of a reductase component HpaC and an oxygenase component HpaB. Some form of interactions between the reductase and the oxygenase facilitate the transfer of FADH(-) to the oxygenase in P.aeruginosa, although interactions are not required in other species.

It carries out the reaction FADH2 + NAD(+) = FAD + NADH + 2 H(+). It functions in the pathway aromatic compound metabolism; 4-hydroxyphenylacetate degradation; pyruvate and succinate semialdehyde from 4-hydroxyphenylacetate: step 1/7. With respect to regulation, the rate of FAD reduction is independent of the presence of HPA, demonstrating that, in contrast to HPAH from A.baumannii, the activity of the HPAH reductase is not allosterically regulated by the substrate. Reductase component of the 4-hydroxyphenylacetate (HPA) 3-hydroxylase. Catalyzes the reduction of FAD by NADH. The reduced flavin is then transferred to the oxygenase component HpaB. Is also able to reduce FMN and riboflavin, but preferentially binds FAD. Has no activity with NADPH as the reductant. This chain is 4-hydroxyphenylacetate 3-monooxygenase reductase component, found in Pseudomonas aeruginosa (strain ATCC 15692 / DSM 22644 / CIP 104116 / JCM 14847 / LMG 12228 / 1C / PRS 101 / PAO1).